The primary structure comprises 401 residues: Nodal homolog 3-B (401 aa).

An N-terminal signal peptide occupies residues 1-18 (MALLNLFFCLVFSSPLMA). The propeptide occupies 19–274 (MPPVLQGRKS…KVNGFRRLRR (256 aa)). N-linked (GlcNAc...) asparagine glycans are attached at residues N168, N337, N341, and N344. 2 disulfides stabilise this stretch: C299-C365 and C328-C396.

It belongs to the TGF-beta family. Monomer. The propeptide region interacts with bmp4 in a non-covalent manner. In terms of tissue distribution, expressed in the dorsal marginal region of late blastula, becoming restricted to the dorsal blastopore lip (Spemann organizer) at the early gastrula stage.

It localises to the secreted. Exhibits mesoderm-dorsalizing activity and neural-inducing activity, but lacks mesoderm-inducing activity. Regulates the expression of specific mesodermal and neural genes. Induces convergent extension movements at the embryonic midline by activating the fgf signaling pathway to induce t/bra expression in the organizer region. Acts with wnt11 to induce Spemann organizer cells and induce axis formation. The unprocessed protein antagonizes bmp-signaling. The sequence is that of Nodal homolog 3-B (nodal3-b) from Xenopus laevis (African clawed frog).